The sequence spans 440 residues: MLERYANEEMKALWNEQTKFETYLEVEKAVVRAWNKLGQIQDSDCEKICAKAAFNLERIKEIEKTTKHDLIAFTTCVAESLGEESRFFHYGITSSDCIDTAMALLMTKSLKLIQKGVKNLYETLKNRALEHKDTLMVGRSHGVFGEPITFGLVLALFADEIKRHLKALDLTMEFISVGAISGAMGNFAHAPLELEELACEFLGLKTANISNQVIQRDRYARLACDLALLASSCEKIAVNIRHLQRSEVYEVEEAFSTGQKGSSAMPHKRNPILSENITGLCRVIRSFTTPMLENVALWHERDMSHSSVERFALPDLFITSDFMLSRLNSVIKNLVVYPKNMLKNLALSGGLVFSQRVLLELPKKGLSREESYSIVQENAMKIWEVLQQGAFKNTDENLFLNALLNDERLKKYLSEDEIKACFDYNYYTKNVGAIFKRVFE.

Residues 4-5 (RY), 67-69 (KHD), and 93-94 (TS) contribute to the N(6)-(1,2-dicarboxyethyl)-AMP site. The active-site Proton donor/acceptor is the histidine 141. Glutamine 212 lines the N(6)-(1,2-dicarboxyethyl)-AMP pocket. Serine 262 functions as the Proton donor/acceptor in the catalytic mechanism. N(6)-(1,2-dicarboxyethyl)-AMP contacts are provided by residues serine 263, 268–270 (KRN), asparagine 276, and 307–311 (SVERF).

It belongs to the lyase 1 family. Adenylosuccinate lyase subfamily. In terms of assembly, homotetramer. Residues from neighboring subunits contribute catalytic and substrate-binding residues to each active site.

It carries out the reaction N(6)-(1,2-dicarboxyethyl)-AMP = fumarate + AMP. The catalysed reaction is (2S)-2-[5-amino-1-(5-phospho-beta-D-ribosyl)imidazole-4-carboxamido]succinate = 5-amino-1-(5-phospho-beta-D-ribosyl)imidazole-4-carboxamide + fumarate. It functions in the pathway purine metabolism; AMP biosynthesis via de novo pathway; AMP from IMP: step 2/2. The protein operates within purine metabolism; IMP biosynthesis via de novo pathway; 5-amino-1-(5-phospho-D-ribosyl)imidazole-4-carboxamide from 5-amino-1-(5-phospho-D-ribosyl)imidazole-4-carboxylate: step 2/2. Its function is as follows. Catalyzes two reactions in de novo purine nucleotide biosynthesis. Catalyzes the breakdown of 5-aminoimidazole- (N-succinylocarboxamide) ribotide (SAICAR or 2-[5-amino-1-(5-phospho-beta-D-ribosyl)imidazole-4-carboxamido]succinate) to 5-aminoimidazole-4-carboxamide ribotide (AICAR or 5-amino-1-(5-phospho-beta-D-ribosyl)imidazole-4-carboxamide) and fumarate, and of adenylosuccinate (ADS or N(6)-(1,2-dicarboxyethyl)-AMP) to adenosine monophosphate (AMP) and fumarate. The polypeptide is Adenylosuccinate lyase (purB) (Helicobacter pylori (strain ATCC 700392 / 26695) (Campylobacter pylori)).